We begin with the raw amino-acid sequence, 132 residues long: Flagellar basal body rod protein FlgB (132 aa).

Belongs to the flagella basal body rod proteins family. The basal body constitutes a major portion of the flagellar organelle and consists of a number of rings mounted on a central rod. In Gram-negative bacteria, at least four rings, L, P, S and M are present, whereas Gram-positive bacteria lack the L and P rings. The rod consists of about 26 subunits of FlgG in the distal portion, and FlgB, FlgC and FlgF build up the proximal portion of the rod with about 6 subunits each. Rod assembly occurs by export via the flagellum-specific pathway of its constituent proteins and by their incorporation into the rod structure in the probable order of FlgB, FlgC, FlgF and FlgG. Another protein, FliE, also assembles onto the stable rod structure.

It is found in the bacterial flagellum basal body. Structural component of flagellum, the bacterial motility apparatus. Part of the rod structure of flagellar basal body. The protein is Flagellar basal body rod protein FlgB of Aeromonas hydrophila.